Here is a 269-residue protein sequence, read N- to C-terminus: UPF0162 protein BU173 (269 aa).

It belongs to the UPF0162 family.

This Buchnera aphidicola subsp. Acyrthosiphon pisum (strain APS) (Acyrthosiphon pisum symbiotic bacterium) protein is UPF0162 protein BU173.